We begin with the raw amino-acid sequence, 232 residues long: uncharacterized protein (232 aa).

The interval 119-145 (DEEYRENSKAPEAKARPSFVGEGRRLG) is disordered. Residues 123-133 (RENSKAPEAKA) are compositionally biased toward basic and acidic residues.

This is an uncharacterized protein from Encephalitozoon cuniculi (strain GB-M1) (Microsporidian parasite).